A 513-amino-acid chain; its full sequence is ABC transporter H family member 2 (513 aa).

The ABC transporter domain maps to 39–280 (LTMKNIHKTY…EHYQKLYKEC (242 aa)). Residue 75-82 (GTSGGGKT) participates in ATP binding. The tract at residues 291 to 471 (VTSVFKNDDD…SSSYSNNNNN (181 aa)) is disordered. Residues 324–360 (SYNNNNSNLNNNSNSNSNNNSNNNNSKNYASSSSSSS) show a composition bias toward low complexity. Polar residues predominate over residues 361–386 (VLNGKLSQSTVNNSSIYNHNNDSPFF). Residues 387–471 (NSNNNNNINN…SSSYSNNNNN (85 aa)) are compositionally biased toward low complexity.

It belongs to the ABC transporter superfamily.

In Dictyostelium discoideum (Social amoeba), this protein is ABC transporter H family member 2 (abcH2).